A 152-amino-acid chain; its full sequence is Ribosome maturation factor RimP (152 aa).

This sequence belongs to the RimP family.

The protein resides in the cytoplasm. Functionally, required for maturation of 30S ribosomal subunits. The chain is Ribosome maturation factor RimP from Burkholderia multivorans (strain ATCC 17616 / 249).